Consider the following 453-residue polypeptide: Plasmepsin II (453 aa).

Residues 1-37 lie on the Cytoplasmic side of the membrane; sequence MDITVREHDFKHGFIKSNSTFDGLNIDNSKNKKKIQK. The propeptide occupies 1 to 124; the sequence is MDITVREHDF…SGLTKTNYLG (124 aa). The chain crosses the membrane as a helical; Signal-anchor for type II membrane protein span at residues 38 to 58; it reads GFQILYVLLFCSVMCGLFYYV. The Lumenal portion of the chain corresponds to 59-453; sequence YENVWLQRDN…VGIALAKKNL (395 aa). Residues 140 to 447 enclose the Peptidase A1 domain; that stretch reads FYGDAEVGDN…DYDNHSVGIA (308 aa). The active site involves Asp158. A disulfide bridge connects residues Cys171 and Cys176. Asp338 is an active-site residue. An intrachain disulfide couples Cys373 to Cys409.

This sequence belongs to the peptidase A1 family. As to quaternary structure, component of the hemozoin formation complex (HFC) composed of falcipains FP2A and/or FP2B, plasmepsins PMII, PMIII/HAP and PMIV, heme detoxifying protein HDP and falcilysin FLN. The HFC complex is involved in hemoglobin degradation and detoxification of heme in the food vacuole during the asexual blood stage. Not N-glycosylated. In terms of processing, proteolytically cleaved into the soluble active mature form in the digestive vacuole by cysteine protease falcipains; the process begins at the early ring stage. Proteolysis requires an acidic environment. In absence of falcipains, autoprocessing may serve as an alternate activation system.

Its subcellular location is the membrane. It is found in the vacuole lumen. The protein localises to the vacuole membrane. The catalysed reaction is Hydrolysis of the bonds linking certain hydrophobic residues in hemoglobin or globin. Also cleaves small molecules substrates such as Ala-Leu-Glu-Arg-Thr-Phe-|-Phe(NO2)-Ser-Phe-Pro-Thr.. Its activity is regulated as follows. Inhibited by pepstatin A. During the asexual blood stage, participates in initial cleavage of native host hemoglobin (Hb) resulting in Hb denaturation. May cleave preferentially denatured hemoglobin that has been cleaved by PMI. Digestion of host Hb is an essential step which provides the parasite with amino acids for protein synthesis, and regulates osmolarity. This is Plasmepsin II from Plasmodium falciparum (isolate HB3).